The following is an 804-amino-acid chain: Tubulin polyglutamylase TTLL13 (804 aa).

Residues 1 to 41 (MEPNNCKTSESEEDDIEEEESEEECVREESTTPNSTQQALR) are disordered. Residues 4-30 (NNCKTSESEEDDIEEEESEEECVREES) adopt a coiled-coil conformation. A compositionally biased stretch (acidic residues) spans 11-26 (SEEDDIEEEESEEECV). The TTL domain maps to 85–430 (RRPLAINLTN…RGCDKKKVIE (346 aa)). ATP contacts are provided by residues lysine 202, 208-209 (QG), 230-233 (QQYI), and 243-245 (KFD). Position 208 (glutamine 208) interacts with a protein. Arginine 269 provides a ligand contact to L-glutamate. 291–292 (TN) contributes to the ATP binding site. Residues tyrosine 293 and lysine 311 each contribute to the L-glutamate site. Residues aspartate 376, glutamate 389, and asparagine 391 each coordinate Mg(2+). Position 392 (histidine 392) interacts with a protein. Residues 401 to 482 (RLDREVKDAL…LGGYRRIYPG (82 aa)) are c-MTBD region. Lysine 407 is an L-glutamate binding site. 2 coiled-coil regions span residues 504-541 (ASKAREECARQQLEEIRLKQEQQENPGTKKRKENKEQN) and 585-609 (QDIVEEEELERMKLLLQRENLIRSL). The tract at residues 519-556 (IRLKQEQQENPGTKKRKENKEQNQGESAGEKSRSRTAT) is disordered. Over residues 536–551 (ENKEQNQGESAGEKSR) the composition is skewed to basic and acidic residues.

Belongs to the tubulin--tyrosine ligase family. Requires Mg(2+) as cofactor. As to expression, highly expressed in heart and testis. Expressed in brain, kidney, liver, lung, muscle and trachea. In the brain, expressed in ependymal cilia, cortex, corpus callosum and striatum.

The enzyme catalyses (L-glutamyl)(n)-gamma-L-glutamyl-L-glutamyl-[protein] + L-glutamate + ATP = (L-glutamyl)(n+1)-gamma-L-glutamyl-L-glutamyl-[protein] + ADP + phosphate + H(+). Polyglutamylase which modifies tubulin, generating polyglutamate side chains of variable lengths on the gamma-carboxyl group of specific glutamate residues within the C-terminal tail of tubulin. Mediates ATP-dependent polyglutamate side-chain elongation of the polyglutamylation reaction but not the initiation step. Preferentially modifies the alpha-tubulin tail over a beta-tail. This Mus musculus (Mouse) protein is Tubulin polyglutamylase TTLL13.